A 48-amino-acid chain; its full sequence is Large ribosomal subunit protein bL33A (48 aa).

The protein belongs to the bacterial ribosomal protein bL33 family.

The polypeptide is Large ribosomal subunit protein bL33A (Shouchella clausii (strain KSM-K16) (Alkalihalobacillus clausii)).